The sequence spans 286 residues: uncharacterized protein (286 aa).

4 disordered regions span residues 1–38, 108–146, 196–227, and 241–286; these read MSQK…EDDV, HTGE…RRHK, RTQK…KTRL, and DVDD…PRSS. A compositionally biased stretch (low complexity) spans 18–29; it reads SSSKQVLSSTSS. Residues 243–268 are compositionally biased toward basic and acidic residues; sequence DDQKKDGSGEEKKEKKSAEKEKKISH. A compositionally biased stretch (polar residues) spans 269-278; sequence ENVQSLSPSS.

This is an uncharacterized protein from Caenorhabditis elegans.